Reading from the N-terminus, the 358-residue chain is Probable D-xylulose reductase A (358 aa).

Residues Cys-47, His-72, and Glu-73 each coordinate Zn(2+). Residue 182–187 coordinates NAD(+); sequence GAGPVG.

This sequence belongs to the zinc-containing alcohol dehydrogenase family. Zn(2+) serves as cofactor.

It carries out the reaction xylitol + NAD(+) = D-xylulose + NADH + H(+). Its pathway is carbohydrate degradation; L-arabinose degradation via L-arabinitol; D-xylulose 5-phosphate from L-arabinose (fungal route): step 4/5. Xylitol dehydrogenase which catalyzes the conversion of xylitol to D-xylulose. Xylose is a major component of hemicelluloses such as xylan. Most fungi utilize D-xylose via three enzymatic reactions, xylose reductase (XR), xylitol dehydrogenase (XDH), and xylulokinase, to form xylulose 5-phosphate, which enters pentose phosphate pathway. The polypeptide is Probable D-xylulose reductase A (xdhA) (Aspergillus niger (strain ATCC MYA-4892 / CBS 513.88 / FGSC A1513)).